We begin with the raw amino-acid sequence, 363 residues long: UDP-N-acetylglucosamine--N-acetylmuramyl-(pentapeptide) pyrophosphoryl-undecaprenol N-acetylglucosamine transferase (363 aa).

UDP-N-acetyl-alpha-D-glucosamine is bound by residues 12 to 14 (TAG), Arg-166, Ser-196, and Gln-291.

This sequence belongs to the glycosyltransferase 28 family. MurG subfamily.

The protein resides in the cell inner membrane. It catalyses the reaction di-trans,octa-cis-undecaprenyl diphospho-N-acetyl-alpha-D-muramoyl-L-alanyl-D-glutamyl-meso-2,6-diaminopimeloyl-D-alanyl-D-alanine + UDP-N-acetyl-alpha-D-glucosamine = di-trans,octa-cis-undecaprenyl diphospho-[N-acetyl-alpha-D-glucosaminyl-(1-&gt;4)]-N-acetyl-alpha-D-muramoyl-L-alanyl-D-glutamyl-meso-2,6-diaminopimeloyl-D-alanyl-D-alanine + UDP + H(+). The protein operates within cell wall biogenesis; peptidoglycan biosynthesis. Functionally, cell wall formation. Catalyzes the transfer of a GlcNAc subunit on undecaprenyl-pyrophosphoryl-MurNAc-pentapeptide (lipid intermediate I) to form undecaprenyl-pyrophosphoryl-MurNAc-(pentapeptide)GlcNAc (lipid intermediate II). The chain is UDP-N-acetylglucosamine--N-acetylmuramyl-(pentapeptide) pyrophosphoryl-undecaprenol N-acetylglucosamine transferase from Legionella pneumophila (strain Lens).